Here is a 248-residue protein sequence, read N- to C-terminus: DNA repair protein RecO (248 aa).

The protein belongs to the RecO family.

In terms of biological role, involved in DNA repair and RecF pathway recombination. This is DNA repair protein RecO from Bartonella tribocorum (strain CIP 105476 / IBS 506).